The chain runs to 352 residues: Divinyl chlorophyll a/b light-harvesting protein PcbA (352 aa).

A run of 6 helical transmembrane segments spans residues 27 to 47 (FIAA…AFTL), 90 to 110 (VLAI…GGLL), 142 to 162 (FILG…VEWA), 203 to 223 (VMGG…WHIA), 243 to 263 (AVLS…AFWS), and 306 to 326 (LANV…WHAL).

This sequence belongs to the PsbB/PsbC family. IsiA/Pcb subfamily. In terms of assembly, the antenna complex consists of divinyl chlorophylls (a and b) and divinyl chlorophyll a/b binding proteins and binds less divinyl chlorophyll b than does low-light-adapted Prochlorococcus. Also forms complexes with PSII, consisting of a PSII dimer and 4 or 8 PcbA subunits. These complexes are also found under conditions of iron-starvation. It depends on divinyl chlorophyll a as a cofactor. Requires divinyl chlorophyll b as cofactor.

Its subcellular location is the cellular thylakoid membrane. The antenna complex functions as a light receptor, it captures and delivers excitation energy to photosystem II and possibly to photosystem I. The Prochlorales pcb genes are not related to higher plant LHCs. In Prochlorococcus marinus subsp. pastoris (strain CCMP1986 / NIES-2087 / MED4), this protein is Divinyl chlorophyll a/b light-harvesting protein PcbA (pcbA).